Reading from the N-terminus, the 480-residue chain is Alpha,alpha-trehalose-phosphate synthase [UDP-forming] 2 (480 aa).

D-glucose 6-phosphate is bound by residues tyrosine 97 and aspartate 151. Positions 288 and 293 each coordinate UDP. UDP-alpha-D-glucose contacts are provided by arginine 288 and lysine 293. D-glucose 6-phosphate is bound at residue arginine 326. Residue 387 to 395 (DGMNLVSFE) participates in UDP-alpha-D-glucose binding. Residue 391 to 395 (LVSFE) coordinates UDP.

Belongs to the glycosyltransferase 20 family.

It catalyses the reaction D-glucose 6-phosphate + UDP-alpha-D-glucose = alpha,alpha-trehalose 6-phosphate + UDP + H(+). The protein operates within carbohydrate biosynthesis. Functionally, synthase catalytic subunit of the trehalose synthase complex that catalyzes the production of trehalose from glucose-6-phosphate and UDP-alpha-D-glucose in a two step process. The polypeptide is Alpha,alpha-trehalose-phosphate synthase [UDP-forming] 2 (Aspergillus niger).